The chain runs to 683 residues: MIDRYKHQQLRIGLVSPQQISAWATKILPNGEIVGEVTKPYTFHYKTNKPEKDGLFCERIFGPIKSGICACGNYRVIGDEKEDPKFCEQCGVQFVDSRIRRYQMGYIKLACPVTHVWYLKRLPSYIANLLDKSLKELEGLVYCDYLNFSFARPITKKPTFLRLRGSFKYEIQSWKYSIPLFFTTQGFDTFRNREISTGAVAIREQLADLDLRIILENSLVEWKELGEEGPTGNEWEDRKVGRRKDFLVRRMELTKHFIRTNIEPEWMVLFLLPVLPPELRPIIQIDGGKLMSSDINELYRRVIYRNNTLTDLLTTSRSTPGELVMCQEKLVQEAVDTLLDNGIRGQPMKDGHNKVYKSFSDVIEGKEGRFRETLLGKRVDYSGRSVIVVGPSLSLHRCGLPREIAIELFQTFVIRGLIRQHLASNIGVAKNKIREKEPIVWEILQEVMQGHPVLLNRAPTLHRLGIQAFQPVLVEGRAICLHPLVCKGFNADFDGDQMAVHVPLSLEAQAEARLLMFSHMNLLSPAIGDPISVPTQDMLMGLYVLTSGNRRGICVNRYNPWNRRNYQTKKSDNNNYEYTKEPFFCNSYDAIGAYRQKRINLDSPLWLRWPLDQRVIASREIPIEVHYESLGIYYEIYGHYLIVKSIKKEILFLYIRTTVGHISLYREIEEAIQGFSHACSYGT.

Positions 69, 71, 87, and 90 each coordinate Zn(2+). Aspartate 492, aspartate 494, and aspartate 496 together coordinate Mg(2+).

Belongs to the RNA polymerase beta' chain family. RpoC1 subfamily. In terms of assembly, in plastids the minimal PEP RNA polymerase catalytic core is composed of four subunits: alpha, beta, beta', and beta''. When a (nuclear-encoded) sigma factor is associated with the core the holoenzyme is formed, which can initiate transcription. Requires Mg(2+) as cofactor. The cofactor is Zn(2+).

The protein localises to the plastid. It localises to the chloroplast. The catalysed reaction is RNA(n) + a ribonucleoside 5'-triphosphate = RNA(n+1) + diphosphate. DNA-dependent RNA polymerase catalyzes the transcription of DNA into RNA using the four ribonucleoside triphosphates as substrates. The chain is DNA-directed RNA polymerase subunit beta' from Coffea arabica (Arabian coffee).